The chain runs to 483 residues: Altronate oxidoreductase (483 aa).

18 to 29 (IIQFGEGNFLRA) is an NAD(+) binding site.

It belongs to the mannitol dehydrogenase family. UxaB subfamily.

The catalysed reaction is D-altronate + NAD(+) = keto-D-tagaturonate + NADH + H(+). The protein operates within carbohydrate metabolism; pentose and glucuronate interconversion. This is Altronate oxidoreductase from Cronobacter sakazakii (strain ATCC BAA-894) (Enterobacter sakazakii).